Consider the following 183-residue polypeptide: Anterior gradient protein 1 (183 aa).

An N-terminal signal peptide occupies residues 1-18 (MQAGLSLVCLVLLCSALG).

The protein belongs to the AGR family. From stage 18 (neurula) onward, expressed in the cement gland until it degenerates. More weakly expressed in the adjacent hatching gland.

It is found in the secreted. In terms of biological role, does not appear to be required for cement gland formation. The chain is Anterior gradient protein 1 (ag1) from Xenopus laevis (African clawed frog).